Consider the following 677-residue polypeptide: Methionine--tRNA ligase (677 aa).

The 'HIGH' region signature appears at 14-24; that stretch reads PYANGAIHLGH. Cys145, Cys148, Cys158, and Cys161 together coordinate Zn(2+). Residues 330-334 carry the 'KMSKS' region motif; the sequence is KMSKS. Position 333 (Lys333) interacts with ATP. Positions 576 to 677 constitute a tRNA-binding domain; that stretch reads DFAKVDLRVA…EGALPGMRVM (102 aa).

Belongs to the class-I aminoacyl-tRNA synthetase family. MetG type 1 subfamily. As to quaternary structure, homodimer. Requires Zn(2+) as cofactor.

The protein resides in the cytoplasm. The catalysed reaction is tRNA(Met) + L-methionine + ATP = L-methionyl-tRNA(Met) + AMP + diphosphate. Its function is as follows. Is required not only for elongation of protein synthesis but also for the initiation of all mRNA translation through initiator tRNA(fMet) aminoacylation. The polypeptide is Methionine--tRNA ligase (Saccharophagus degradans (strain 2-40 / ATCC 43961 / DSM 17024)).